Reading from the N-terminus, the 294-residue chain is Small ribosomal subunit protein uS2 (294 aa).

The segment covering 261-274 has biased composition (basic and acidic residues); that stretch reads MDEDADSKKSKAEE. The segment at 261-294 is disordered; the sequence is MDEDADSKKSKAEEPVIPTAEEPAITTIEVDQNE.

Belongs to the universal ribosomal protein uS2 family.

This chain is Small ribosomal subunit protein uS2, found in Leptospira borgpetersenii serovar Hardjo-bovis (strain JB197).